A 460-amino-acid chain; its full sequence is MTNYAIILAAGKGTRMTSDLPKVLHKVSGLTMLEHVFRSVKAISPEKAVTVIGHKSEMVRAVLADQSAFVHQTEQLGTGHAVMMAETQLEGLEGHTLVIAGDTPLITGESLKSLIDFHVNHKNVATILTATAQDPFGYGRIVRNKDGEVIKIVEQKDANEYEQQLKEINTGTYVFDNKRLFEALKCITTNNAQGEYYLTDVVAIFRANKEKVGAYILRDFNESLGVNDRVALATAETVMRQRITQKHMVNGVTFQNPETVYIESDVTIAPDVLIEGNVTLKGRTHIGSGTVLTNGTYIVDSEIGDNCVVTNSMIESSVLAAGVTVGPYAHLRPGTTLDREVHIGNFVEVKGSHIGEKTKAGHLTYIGNAQVGSSVNVGAGTITVNYDGQNKYETVIGDHAFIGSNSTLIAPLEIGDHALTAAGSTISKTVPIDSIAIGRSRQVTKEGYAKRLAHHPSRSK.

The interval 1-229 is pyrophosphorylase; the sequence is MTNYAIILAA…FNESLGVNDR (229 aa). Residues 8–11, Lys22, Gln72, and 77–78 contribute to the UDP-N-acetyl-alpha-D-glucosamine site; these read LAAG and GT. Asp102 contacts Mg(2+). Residues Gly139, Glu154, Asn169, and Asn227 each contribute to the UDP-N-acetyl-alpha-D-glucosamine site. A Mg(2+)-binding site is contributed by Asn227. Residues 230–250 form a linker region; the sequence is VALATAETVMRQRITQKHMVN. Residues 251–460 are N-acetyltransferase; the sequence is GVTFQNPETV…RLAHHPSRSK (210 aa). Arg332 and Lys350 together coordinate UDP-N-acetyl-alpha-D-glucosamine. His362 acts as the Proton acceptor in catalysis. UDP-N-acetyl-alpha-D-glucosamine contacts are provided by Tyr365 and Asn376. Acetyl-CoA is bound by residues Ala379, 385–386, Ser404, Ala422, and Arg439; that span reads NY.

It in the N-terminal section; belongs to the N-acetylglucosamine-1-phosphate uridyltransferase family. The protein in the C-terminal section; belongs to the transferase hexapeptide repeat family. Homotrimer. Mg(2+) is required as a cofactor.

Its subcellular location is the cytoplasm. It carries out the reaction alpha-D-glucosamine 1-phosphate + acetyl-CoA = N-acetyl-alpha-D-glucosamine 1-phosphate + CoA + H(+). The catalysed reaction is N-acetyl-alpha-D-glucosamine 1-phosphate + UTP + H(+) = UDP-N-acetyl-alpha-D-glucosamine + diphosphate. It participates in nucleotide-sugar biosynthesis; UDP-N-acetyl-alpha-D-glucosamine biosynthesis; N-acetyl-alpha-D-glucosamine 1-phosphate from alpha-D-glucosamine 6-phosphate (route II): step 2/2. It functions in the pathway nucleotide-sugar biosynthesis; UDP-N-acetyl-alpha-D-glucosamine biosynthesis; UDP-N-acetyl-alpha-D-glucosamine from N-acetyl-alpha-D-glucosamine 1-phosphate: step 1/1. Its pathway is bacterial outer membrane biogenesis; LPS lipid A biosynthesis. Catalyzes the last two sequential reactions in the de novo biosynthetic pathway for UDP-N-acetylglucosamine (UDP-GlcNAc). The C-terminal domain catalyzes the transfer of acetyl group from acetyl coenzyme A to glucosamine-1-phosphate (GlcN-1-P) to produce N-acetylglucosamine-1-phosphate (GlcNAc-1-P), which is converted into UDP-GlcNAc by the transfer of uridine 5-monophosphate (from uridine 5-triphosphate), a reaction catalyzed by the N-terminal domain. This Streptococcus pyogenes serotype M6 (strain ATCC BAA-946 / MGAS10394) protein is Bifunctional protein GlmU.